Consider the following 388-residue polypeptide: Phosphoribosylformylglycinamidine cyclo-ligase, chloroplastic/mitochondrial (388 aa).

This sequence belongs to the AIR synthase family.

It is found in the plastid. Its subcellular location is the chloroplast. The protein resides in the mitochondrion. The catalysed reaction is 2-formamido-N(1)-(5-O-phospho-beta-D-ribosyl)acetamidine + ATP = 5-amino-1-(5-phospho-beta-D-ribosyl)imidazole + ADP + phosphate + H(+). It functions in the pathway purine metabolism; IMP biosynthesis via de novo pathway; 5-amino-1-(5-phospho-D-ribosyl)imidazole from N(2)-formyl-N(1)-(5-phospho-D-ribosyl)glycinamide: step 2/2. This is Phosphoribosylformylglycinamidine cyclo-ligase, chloroplastic/mitochondrial (PUR5) from Vigna unguiculata (Cowpea).